The sequence spans 1036 residues: Multidrug resistance protein MdtC (1036 aa).

Transmembrane regions (helical) follow at residues 12–34 (VATTLLSLAITLCGVLGFTLLPV), 336–353 (RALVIAIGLVILVVFLFL), 360–382 (LIPAIAVPVSLIGTFTAMYLCGF), 431–450 (VGFTVLSMSISLVAVFIPLL), 463–485 (FAITLTTSISISLLVSLTLTPMM), 528–547 (WVLLILAGIIALNVWLYINI), 853–875 (LFLILAAIITVYLVLGILYESYI), 895–917 (LELFDTPFSLIALIGIMLLIGIV), 949–971 (LRFRPILMTTLAALFGSLPLVLS), and 986–1008 (IVGGLVMSQLLTLYTTPVVYLCF).

Belongs to the resistance-nodulation-cell division (RND) (TC 2.A.6) family. MdtC subfamily. Part of a tripartite efflux system composed of MdtA, MdtB and MdtC. MdtC forms a heteromultimer with MdtB.

It localises to the cell inner membrane. This Photorhabdus laumondii subsp. laumondii (strain DSM 15139 / CIP 105565 / TT01) (Photorhabdus luminescens subsp. laumondii) protein is Multidrug resistance protein MdtC.